A 1291-amino-acid chain; its full sequence is DNA-directed RNA polymerase subunit beta' (1291 aa).

Zn(2+) contacts are provided by Cys-60, Cys-62, Cys-75, and Cys-78. 3 residues coordinate Mg(2+): Asp-535, Asp-537, and Asp-539. Zn(2+) contacts are provided by Cys-874, Cys-951, Cys-958, and Cys-961.

The protein belongs to the RNA polymerase beta' chain family. As to quaternary structure, the RNAP catalytic core consists of 2 alpha, 1 beta, 1 beta' and 1 omega subunit. When a sigma factor is associated with the core the holoenzyme is formed, which can initiate transcription. Mg(2+) is required as a cofactor. It depends on Zn(2+) as a cofactor.

It catalyses the reaction RNA(n) + a ribonucleoside 5'-triphosphate = RNA(n+1) + diphosphate. DNA-dependent RNA polymerase catalyzes the transcription of DNA into RNA using the four ribonucleoside triphosphates as substrates. The chain is DNA-directed RNA polymerase subunit beta' from Leifsonia xyli subsp. xyli (strain CTCB07).